The chain runs to 280 residues: 2-dehydro-3-deoxyphosphooctonate aldolase (280 aa).

The protein belongs to the KdsA family.

It localises to the cytoplasm. It carries out the reaction D-arabinose 5-phosphate + phosphoenolpyruvate + H2O = 3-deoxy-alpha-D-manno-2-octulosonate-8-phosphate + phosphate. The protein operates within carbohydrate biosynthesis; 3-deoxy-D-manno-octulosonate biosynthesis; 3-deoxy-D-manno-octulosonate from D-ribulose 5-phosphate: step 2/3. It functions in the pathway bacterial outer membrane biogenesis; lipopolysaccharide biosynthesis. This chain is 2-dehydro-3-deoxyphosphooctonate aldolase, found in Thiobacillus denitrificans (strain ATCC 25259 / T1).